Consider the following 309-residue polypeptide: Ribosomal protein L11 methyltransferase (309 aa).

Threonine 160, glycine 181, aspartate 203, and asparagine 245 together coordinate S-adenosyl-L-methionine.

It belongs to the methyltransferase superfamily. PrmA family.

The protein localises to the cytoplasm. It carries out the reaction L-lysyl-[protein] + 3 S-adenosyl-L-methionine = N(6),N(6),N(6)-trimethyl-L-lysyl-[protein] + 3 S-adenosyl-L-homocysteine + 3 H(+). Methylates ribosomal protein L11. This Caldanaerobacter subterraneus subsp. tengcongensis (strain DSM 15242 / JCM 11007 / NBRC 100824 / MB4) (Thermoanaerobacter tengcongensis) protein is Ribosomal protein L11 methyltransferase.